We begin with the raw amino-acid sequence, 426 residues long: 3-phosphoshikimate 1-carboxyvinyltransferase (426 aa).

The 3-phosphoshikimate site is built by Lys22, Ser23, and Arg27. Phosphoenolpyruvate is bound at residue Lys22. Positions 96 and 124 each coordinate phosphoenolpyruvate. 3-phosphoshikimate contacts are provided by Ser170, Ser171, Gln172, Ser198, Asp314, Asn337, and Lys341. Gln172 contacts phosphoenolpyruvate. Asp314 functions as the Proton acceptor in the catalytic mechanism. Phosphoenolpyruvate is bound by residues Arg345, Arg387, and Lys412.

It belongs to the EPSP synthase family. Monomer.

Its subcellular location is the cytoplasm. It carries out the reaction 3-phosphoshikimate + phosphoenolpyruvate = 5-O-(1-carboxyvinyl)-3-phosphoshikimate + phosphate. It participates in metabolic intermediate biosynthesis; chorismate biosynthesis; chorismate from D-erythrose 4-phosphate and phosphoenolpyruvate: step 6/7. In terms of biological role, catalyzes the transfer of the enolpyruvyl moiety of phosphoenolpyruvate (PEP) to the 5-hydroxyl of shikimate-3-phosphate (S3P) to produce enolpyruvyl shikimate-3-phosphate and inorganic phosphate. The protein is 3-phosphoshikimate 1-carboxyvinyltransferase of Photobacterium damsela subsp. piscicida (Pasteurella piscicida).